The following is a 59-amino-acid chain: Cecropin-B2 (59 aa).

Residues 1-23 (MNFNKLFLIVILAALLLLGQTEA) form the signal peptide. L57 carries the leucine amide modification.

The protein belongs to the cecropin family.

Its subcellular location is the secreted. In terms of biological role, cecropins have lytic and antibacterial activity against several Gram-positive and Gram-negative bacteria. This is Cecropin-B2 (CECB2) from Culex pipiens pipiens (Northern house mosquito).